Consider the following 371-residue polypeptide: Histidinol-phosphate aminotransferase 2 (371 aa).

The residue at position 232 (K232) is an N6-(pyridoxal phosphate)lysine.

It belongs to the class-II pyridoxal-phosphate-dependent aminotransferase family. Histidinol-phosphate aminotransferase subfamily. Homodimer. It depends on pyridoxal 5'-phosphate as a cofactor.

It catalyses the reaction L-histidinol phosphate + 2-oxoglutarate = 3-(imidazol-4-yl)-2-oxopropyl phosphate + L-glutamate. The protein operates within amino-acid biosynthesis; L-histidine biosynthesis; L-histidine from 5-phospho-alpha-D-ribose 1-diphosphate: step 7/9. The polypeptide is Histidinol-phosphate aminotransferase 2 (Methylococcus capsulatus (strain ATCC 33009 / NCIMB 11132 / Bath)).